The chain runs to 446 residues: GTPase Der (446 aa).

2 consecutive EngA-type G domains span residues 3-168 and 181-354; these read PVIA…YAGQ and IKIA…KAAM. Residues 9–16, 57–61, 120–123, 187–194, 234–238, and 299–302 each bind GTP; these read GRPNVGKS, DTGGF, NKAE, DTAGL, and NKWD. The KH-like domain occupies 355 to 439; that stretch reads SKLPTPKLTR…PLRIEFRSST (85 aa).

This sequence belongs to the TRAFAC class TrmE-Era-EngA-EngB-Septin-like GTPase superfamily. EngA (Der) GTPase family. As to quaternary structure, associates with the 50S ribosomal subunit.

Functionally, GTPase that plays an essential role in the late steps of ribosome biogenesis. The sequence is that of GTPase Der from Paraburkholderia phymatum (strain DSM 17167 / CIP 108236 / LMG 21445 / STM815) (Burkholderia phymatum).